Consider the following 802-residue polypeptide: Exocyst complex component 6 (802 aa).

Belongs to the SEC15 family. In terms of assembly, the exocyst complex is composed of EXOC1, EXOC2, EXOC3, EXOC4, EXOC5, EXOC6, EXOC7 and EXOC8. Interacts with CNTRL. Interacts with RAB11A in a GTP-dependent manner.

The protein localises to the cytoplasm. It is found in the perinuclear region. The protein resides in the cell projection. It localises to the growth cone. Its subcellular location is the midbody. The protein localises to the midbody ring. Its function is as follows. Component of the exocyst complex involved in the docking of exocytic vesicles with fusion sites on the plasma membrane. Together with RAB11A, RAB3IP, RAB8A, PARD3, PRKCI, ANXA2, CDC42 and DNMBP promotes transcytosis of PODXL to the apical membrane initiation sites (AMIS), apical surface formation and lumenogenesis. The sequence is that of Exocyst complex component 6 (Exoc6) from Mus musculus (Mouse).